A 35-amino-acid polypeptide reads, in one-letter code: GYCAEKGIRCDDIHCCTGLKCKCNASGYNCVCRKK.

4 cysteine pairs are disulfide-bonded: Cys-3-Cys-16, Cys-10-Cys-21, Cys-15-Cys-32, and Cys-23-Cys-30.

The protein belongs to the neurotoxin 33 family. As to expression, expressed by the venom gland.

The protein resides in the secreted. In terms of biological role, inhibits P2RX3 receptors. Has an analgesic effect in rat. Enhances the high-affinity desensitization of P2RX3 purinoceptors. At 50 nM, decreases the IC(50) for ambient ATP from 46.5 nM to 12.7 nM in mouse P2RX3. This chain is Purotoxin-1, found in Alopecosa marikovskyi (Wolf spider).